The following is a 121-amino-acid chain: Protein ripply2.1 (121 aa).

The disordered stretch occupies residues 1–69; the sequence is MEPNQQRSCG…DKGKPPSFQH (69 aa). A WRPW motif motif is present at residues 29–32; sequence WRPW. Polar residues predominate over residues 39 to 57; that stretch reads HVQNPPTAQQQFYSDNQSH. The ripply homology domain stretch occupies residues 69 to 104; it reads HPVKLFWPKSRCYDFMYQEAEELLRHFPVQATISLY.

Belongs to the ripply family. Expressed in the presomitic mesoderm (PSM) in the anterior halves of somitomeres S-0, S-I and S-II and in the newly formed somites.

Its subcellular location is the nucleus. In terms of biological role, required during somitogenesis to regulate somite differentiation and the positioning of the presomitic mesoderm-front. Represses the expression of genes involved in somite segmentation by acting with the corepressor tle4 to down-regulate the transcriptional activity of tbx6. Also regulates retinoic acid signaling during somitogenesis and is necessary for the expression of aldh1a2/raldh2. This is Protein ripply2.1 (ripply2.1) from Xenopus laevis (African clawed frog).